We begin with the raw amino-acid sequence, 630 residues long: MENSTTTISREELEELQEAFNKIDIDNSGYVSDYELQDLFKEASLPLPGYKVREIVEKILVVADNNKDGKISFEEFVSLMQELKSKDISKTFRKIINKREGITAIGGTSSISSEGTQHSYSEEEKVAFVNWINKALENDADCSHLLPMNPNDGSLFKSLADGILLCKMINLSEPDTIDERAINKKKLTPFTVSENLNLALNSASAIGCTVVNIGAQDLKEGKPHLVLGLLWQIIKVGLFADIEISRNEALIALLKDGEDLEELMKLSPEELLLRWVNYHLTNAGWRTINNFSQDIKDSKAYFHLLNQIAPKGDRDDGPAVAIDLSGFNEKNDLKRAGFMLQEADKLGCRQFVTPADVVSGNPKLNLAFVANLFNTYPCLHKPDNNDIDLNLLEGESKEERTFRNWMNSLGVNPYINHLYSDLADALVIFQLYEMIRVPVNWSQVNKPPYPALGGNMKKIENCNYAVELGKNEAKFSLVGIAGQDLNEGNATLTLALVWQLMRRYTLKVLSDLGEGEKVTDDIIIKWVNQTLKSANKSTSISSFKDKSISTSLPVLDLIDAIAPNAVRQEMIKREHLTDEDKLNNAKYAISVARKIGARIYALPDDLVEVKPKMVMTVFACLMGKGLNRLK.

Position 1 is an N-acetylmethionine (Met-1). EF-hand domains are found at residues 11–46 and 51–86; these read EELE…ASLP and KVRE…LKSK. Ca(2+) is bound by residues Asp-24, Asp-26, Ser-28, Tyr-30, Glu-35, Asp-64, Asn-66, Asp-68, Lys-70, and Glu-75. Actin-binding regions lie at residues 108-381 and 382-626; these read TSSI…CLHK and PDNN…GKGL. Calponin-homology (CH) domains follow at residues 122-238, 266-377, 396-505, and 517-626; these read EEEK…KVGL, LSPE…NTYP, SKEE…RRYT, and KVTD…GKGL.

In terms of assembly, monomer. In terms of processing, phosphorylated. In the inner ear, it is expressed in the organ of Corti. Abundant in the utricle (at protein level).

It is found in the cytoplasm. The protein resides in the cell projection. The protein localises to the stereocilium. Functionally, actin-bundling protein. In the inner ear, it is required for stereocilia formation. Mediates liquid packing of actin filaments that is necessary for stereocilia to grow to their proper dimensions. This Mus musculus (Mouse) protein is Plastin-1 (Pls1).